Reading from the N-terminus, the 456-residue chain is Exodeoxyribonuclease 7 large subunit (456 aa).

The protein belongs to the XseA family. In terms of assembly, heterooligomer composed of large and small subunits.

Its subcellular location is the cytoplasm. It carries out the reaction Exonucleolytic cleavage in either 5'- to 3'- or 3'- to 5'-direction to yield nucleoside 5'-phosphates.. Functionally, bidirectionally degrades single-stranded DNA into large acid-insoluble oligonucleotides, which are then degraded further into small acid-soluble oligonucleotides. This chain is Exodeoxyribonuclease 7 large subunit, found in Erwinia tasmaniensis (strain DSM 17950 / CFBP 7177 / CIP 109463 / NCPPB 4357 / Et1/99).